The sequence spans 338 residues: DNA-directed RNA polymerase subunit alpha (338 aa).

The interval 1 to 234 (MIHKNWAELI…DQLGIFVNFE (234 aa)) is alpha N-terminal domain (alpha-NTD). The segment at 250–338 (FNPLLLKKVD…DLAKKFEDSF (89 aa)) is alpha C-terminal domain (alpha-CTD).

This sequence belongs to the RNA polymerase alpha chain family. In terms of assembly, homodimer. The RNAP catalytic core consists of 2 alpha, 1 beta, 1 beta' and 1 omega subunit. When a sigma factor is associated with the core the holoenzyme is formed, which can initiate transcription.

It catalyses the reaction RNA(n) + a ribonucleoside 5'-triphosphate = RNA(n+1) + diphosphate. DNA-dependent RNA polymerase catalyzes the transcription of DNA into RNA using the four ribonucleoside triphosphates as substrates. The protein is DNA-directed RNA polymerase subunit alpha of Roseobacter denitrificans (strain ATCC 33942 / OCh 114) (Erythrobacter sp. (strain OCh 114)).